We begin with the raw amino-acid sequence, 441 residues long: Serine carboxypeptidase-like 3 (441 aa).

The N-terminal stretch at 1 to 30 is a signal peptide; it reads MASNYVFSVLRSLLLLIHTVFLGQHHVSSA. Cystine bridges form between Cys-88/Cys-331, Cys-252/Cys-266, and Cys-290/Cys-297. Asn-109 is a glycosylation site (N-linked (GlcNAc...) asparagine). The active site involves Ser-184. Residue Asn-350 is glycosylated (N-linked (GlcNAc...) asparagine). Asp-366 is a catalytic residue. An N-linked (GlcNAc...) asparagine glycan is attached at Asn-382. The active site involves His-419.

The protein belongs to the peptidase S10 family. In terms of tissue distribution, expressed in roots.

It is found in the secreted. Probable carboxypeptidase. The sequence is that of Serine carboxypeptidase-like 3 (SCPL3) from Arabidopsis thaliana (Mouse-ear cress).